A 206-amino-acid polypeptide reads, in one-letter code: Thymidylate kinase (206 aa).

7 to 14 (GGEGVGKT) lines the ATP pocket.

This sequence belongs to the thymidylate kinase family.

It carries out the reaction dTMP + ATP = dTDP + ADP. Its function is as follows. Phosphorylation of dTMP to form dTDP in both de novo and salvage pathways of dTTP synthesis. The chain is Thymidylate kinase from Synechococcus sp. (strain JA-2-3B'a(2-13)) (Cyanobacteria bacterium Yellowstone B-Prime).